The chain runs to 1040 residues: Multidrug resistance protein MdtB (1040 aa).

Helical transmembrane passes span 16–36 (FILR…AGII), 347–367 (LMLA…NIPA), 369–389 (IIPA…MVFL), 396–416 (LTLM…IVVI), 440–460 (IGFT…PLLF), 472–492 (FAVT…TLTP), 537–557 (WLTL…WIFI), 863–883 (LGST…VLGV), 888–908 (FIHP…ALLA), 911–931 (IAGA…IGIV), 968–988 (ILMT…STGV), and 998–1018 (IGMV…TPVI).

The protein belongs to the resistance-nodulation-cell division (RND) (TC 2.A.6) family. MdtB subfamily. Part of a tripartite efflux system composed of MdtA, MdtB and MdtC. MdtB forms a heteromultimer with MdtC.

The protein resides in the cell inner membrane. The protein is Multidrug resistance protein MdtB of Cronobacter sakazakii (strain ATCC BAA-894) (Enterobacter sakazakii).